Here is a 130-residue protein sequence, read N- to C-terminus: Small ribosomal subunit protein uS8 (130 aa).

Belongs to the universal ribosomal protein uS8 family. In terms of assembly, part of the 30S ribosomal subunit.

Functionally, one of the primary rRNA binding proteins, it binds directly to 16S rRNA central domain where it helps coordinate assembly of the platform of the 30S subunit. The chain is Small ribosomal subunit protein uS8 from Thermococcus kodakarensis (strain ATCC BAA-918 / JCM 12380 / KOD1) (Pyrococcus kodakaraensis (strain KOD1)).